A 153-amino-acid polypeptide reads, in one-letter code: MSLRPCLTPSSMQYSDIYIHTPHPHPHPHPHTPTHTHPHTPTPTPHPHPHTPHPHTTPTPTPHHTHTPHTTLSNLSLNLPSHYPTSPLVTLPHSTIPLPTTIHLSTYYYHPPPIITVTLQLPISNSTTITLLLPYHPPCPTHCTVVLPSILKR.

Residues 17-78 are disordered; the sequence is IYIHTPHPHP…HTTLSNLSLN (62 aa). Over residues 22–38 the composition is skewed to basic residues; that stretch reads PHPHPHPHPHTPTHTHP.

This is an uncharacterized protein from Saccharomyces cerevisiae (strain ATCC 204508 / S288c) (Baker's yeast).